We begin with the raw amino-acid sequence, 166 residues long: Phosphopantetheine adenylyltransferase (166 aa).

A substrate-binding site is contributed by Ser-11. Residues Ser-11–Phe-12 and His-19 each bind ATP. Positions 43, 76, and 90 each coordinate substrate. Residues Gly-91–Arg-93, Glu-101, and Leu-126–Ser-132 each bind ATP.

The protein belongs to the bacterial CoaD family. Homohexamer. Mg(2+) serves as cofactor.

It is found in the cytoplasm. The enzyme catalyses (R)-4'-phosphopantetheine + ATP + H(+) = 3'-dephospho-CoA + diphosphate. It participates in cofactor biosynthesis; coenzyme A biosynthesis; CoA from (R)-pantothenate: step 4/5. Functionally, reversibly transfers an adenylyl group from ATP to 4'-phosphopantetheine, yielding dephospho-CoA (dPCoA) and pyrophosphate. The sequence is that of Phosphopantetheine adenylyltransferase from Streptococcus equi subsp. equi (strain 4047).